A 507-amino-acid chain; its full sequence is Maturase K (507 aa).

This sequence belongs to the intron maturase 2 family. MatK subfamily.

It is found in the plastid. It localises to the chloroplast. In terms of biological role, usually encoded in the trnK tRNA gene intron. Probably assists in splicing its own and other chloroplast group II introns. The polypeptide is Maturase K (Ranunculus acris (Meadow buttercup)).